The chain runs to 87 residues: Acyl-CoA-binding protein (87 aa).

Residues 2–87 (VSQLFEEKAK…VDQLIAKYSS (86 aa)) enclose the ACB domain. An acyl-CoA-binding positions include 29-33 (YALYK), Lys-51, and Lys-55. Lys-51 participates in a covalent cross-link: Glycyl lysine isopeptide (Lys-Gly) (interchain with G-Cter in ubiquitin). Lys-72 participates in a covalent cross-link: Glycyl lysine isopeptide (Lys-Gly) (interchain with G-Cter in ubiquitin). Position 74 (Tyr-74) interacts with an acyl-CoA.

This sequence belongs to the ACBP family.

Functionally, binds medium- and long-chain acyl-CoA esters with very high affinity and may function as an intracellular carrier of acyl-CoA esters. Enhances the in vitro activity of the ceramide synthase complex. The sequence is that of Acyl-CoA-binding protein (ACB1) from Saccharomyces cerevisiae (strain ATCC 204508 / S288c) (Baker's yeast).